Reading from the N-terminus, the 1306-residue chain is Disease resistance protein Roq1 (1306 aa).

Residues 10–179 (RSYDVFLSFR…QILKDIFDKF (170 aa)) enclose the TIR domain. Residues 19–24 (RGEDTR) and Gly52 contribute to the NAD(+) site. Residue Glu86 is part of the active site. The NB-ARC domain maps to 198–417 (KKLSSLLRMD…IDRLKDNPEG (220 aa)). 18 LRR repeats span residues 200–224 (LSSLLRMDLKGVRLVGIWGMGGVGK), 252–275 (LQHHTLLYLQKTLLSKLLKVEFVD), 417–440 (GEIMATLKISFDGLRDYEKSIFLD), 599–622 (PSKLVYLTMKGSSIIELWNGAKRL), 645–669 (ITNLERLILSSCDALVEVHPSVGFL), 670–693 (KNLILLNMDHCISLERLPAIIQSE), 716–739 (MTHLKKLDLTSTGIRELPASIEHL), 741–763 (SLENLQMHSCNQLVSLPSSIWRF), 784–807 (SNCTRELILKLVSIKELPTSIGNL), 808–831 (TSLNFLEICNCKTISSLSSSIWGL), 832–857 (TSLTTLKLLDCRKLKNLPGIPNAINH), 878–902 (LDLLRIIDMSWCSCISSLPHNIWML), 904–926 (FLRILCISYCSRLEYLPENLGHL), 927–949 (EHLEELLADGTGILRLPSSVARL), 961–983 (FAIGPKVQYSSSMLNLPDDVFGS), 987–1010 (LGSVVKLNLSGNGFCNLPETMNQL), 1013–1036 (LEYLDITFCQRLEALPELPPSIKE), and 1045–1070 (LRIMEDLVIKCKELNLIAVTKIEYQN).

The protein belongs to the disease resistance TIR-NB-LRR family. In terms of assembly, homodimer.

It catalyses the reaction NAD(+) + H2O = ADP-D-ribose + nicotinamide + H(+). It carries out the reaction NAD(+) = 2'cADPR + nicotinamide + H(+). Disease resistance (R) protein that specifically recognizes the Xanthomonas and Pseudomonas effector proteins XopQ and HopQ1, and triggers cell death. An NAD(+) hydrolase (NADase): in response to activation, catalyzes cleavage of NAD(+) into ADP-D-ribose (ADPR) and nicotinamide; NAD(+) cleavage triggers a defense system that promotes cell death. Makes small amounts of 2' cyclic ADPR (2'cADPR). In Nicotiana benthamiana, this protein is Disease resistance protein Roq1.